The primary structure comprises 81 residues: Photosystem I iron-sulfur center (81 aa).

2 consecutive 4Fe-4S ferredoxin-type domains span residues 2–31 (SHSV…MVPW) and 39–68 (IASS…IRVY). [4Fe-4S] cluster is bound by residues cysteine 11, cysteine 14, cysteine 17, cysteine 21, cysteine 48, cysteine 51, cysteine 54, and cysteine 58.

In terms of assembly, the cyanobacterial PSI reaction center is composed of one copy each of PsaA,B,C,D,E,F,I,J,K,L,M and X, and forms trimeric complexes. [4Fe-4S] cluster serves as cofactor.

It is found in the cellular thylakoid membrane. The enzyme catalyses reduced [plastocyanin] + hnu + oxidized [2Fe-2S]-[ferredoxin] = oxidized [plastocyanin] + reduced [2Fe-2S]-[ferredoxin]. Functionally, apoprotein for the two 4Fe-4S centers FA and FB of photosystem I (PSI); essential for photochemical activity. FB is the terminal electron acceptor of PSI, donating electrons to ferredoxin. The C-terminus interacts with PsaA/B/D and helps assemble the protein into the PSI complex. Required for binding of PsaD and PsaE to PSI. PSI is a plastocyanin/cytochrome c6-ferredoxin oxidoreductase, converting photonic excitation into a charge separation, which transfers an electron from the donor P700 chlorophyll pair to the spectroscopically characterized acceptors A0, A1, FX, FA and FB in turn. In terms of biological role, mutant proteins with a 3Fe-4S center are unable to reconstitute PSI activity in vivo. The chain is Photosystem I iron-sulfur center from Synechocystis sp. (strain ATCC 27184 / PCC 6803 / Kazusa).